The sequence spans 678 residues: Putative pentatricopeptide repeat-containing protein At3g18840 (678 aa).

PPR repeat units follow at residues 22-56 (TAVS…NVYS), 57-84 (WNAV…NCER), 85-116 (DLIT…MHRK), 124-158 (DDFT…GNDG), 159-190 (TKFA…CVEF), 192-222 (DSVA…NPEL), 224-258 (DTIS…GLKW), 259-293 (DEHS…GSYS), 294-324 (NKFV…YGFG), 325-359 (NLYS…NLVV), 360-390 (WTAM…ETNT), 392-426 (DSLV…GILM), 427-457 (DKKL…SFER), 458-492 (DTVM…GFKP), 493-528 (DEIT…NISP), and 529-563 (ETGH…EKDA). Residues 565–640 (ILGAFLNACS…FSGCSWANID (76 aa)) form a type E motif region. The segment at 641-671 (KQFHMFTSSDISHYETEAIYAMLHFVTKDLS) is type E(+) motif.

The protein belongs to the PPR family. PCMP-E subfamily.

This chain is Putative pentatricopeptide repeat-containing protein At3g18840 (PCMP-E92), found in Arabidopsis thaliana (Mouse-ear cress).